Here is an 878-residue protein sequence, read N- to C-terminus: Aconitase htyD (878 aa).

Residues Gln-173 and 290–292 contribute to the substrate site; that span reads DSH. [4Fe-4S] cluster-binding residues include Cys-472, Cys-535, and Cys-538. Residues Arg-558 and Arg-563 each contribute to the substrate site. Residues 626–671 are disordered; it reads IAIANQRTKPAPTMPAYVEPYRSFQPPVPPSSDQPQSMKDHGKTSN. 742 to 743 provides a ligand contact to substrate; the sequence is SR.

The protein belongs to the aconitase/IPM isomerase family.

It functions in the pathway antifungal biosynthesis. Aconitase; part of the gene cluster that mediates the de novo generation of L-homotyrosine from acetyl-CoA and 4-hydroxyphenyl-pyruvate. L-homotyrosine is a building block of echinocandin B, a fungal lipidated cyclic hexapeptide that acts as an antifungal agent. L-homotyrosine 4-hydroxyphenyl-pyruvate first undergoes an aldol-type condensation by htyA with the C-2 of acetyl-CoA followed by the release of CoA to form 2-(4-hydroxybenzyl)-malate. This is followed by isomerization of 2-(4-hydroxy-benzyl)-malate to 3-(4-hydroxybenzyl)-malate by htyD. Thereafter, 3-(4-hydroxybenzyl)-malate undergoes decarboxylation and oxidation to form 2-oxo-4-(4-hydroxybenzyl)butanoic acid, coupled to reduction of NAD(+) to NADH by htyC. The product then undergoes transamination catalyzed by htyB to form L-homotyrosine. The chain is Aconitase htyD from Aspergillus rugulosus (Emericella rugulosa).